Here is a 691-residue protein sequence, read N- to C-terminus: Dynamin-1-like protein (691 aa).

The 280-residue stretch at 22 to 301 (IIQLPQIAVV…LMHHIRDCLP (280 aa)) folds into the Dynamin-type G domain. The segment at 32–39 (GTQSSGKS) is G1 motif. Position 32–40 (32–40 (GTQSSGKSS)) interacts with GTP. The segment at 58 to 60 (VTR) is G2 motif. The segment at 145–148 (DLPG) is G3 motif. The G4 motif stretch occupies residues 214–217 (TKLD). Residues 214–220 (TKLDLMD) and 245–248 (NRSQ) contribute to the GTP site. A G5 motif region spans residues 244-247 (VNRS). The tract at residues 343–488 (YCNTIEGTAK…NEMVHNLVAI (146 aa)) is middle domain. 2 stretches are compositionally biased toward basic and acidic residues: residues 522–531 (LPTSVPRDKM) and 551–563 (KKGDEGQGEEKTK). A disordered region spans residues 522 to 573 (LPTSVPRDKMAGGAQAEQEGGTGTWRGMLKKGDEGQGEEKTKLQSSIPASPQ). In terms of domain architecture, GED spans 599-690 (CEVIERLIKS…VIAEIRETHL (92 aa)). An important for homodimerization region spans residues 609–623 (YFLIVRKNIQDSVPK).

Belongs to the TRAFAC class dynamin-like GTPase superfamily. Dynamin/Fzo/YdjA family. Homotetramer; dimerizes through the N-terminal GTP-middle region of one molecule binding to the GED domain of another DNM1L molecule. Oligomerizes in a GTP-dependent manner to form membrane-associated tubules with a spiral pattern.

It is found in the cytoplasm. It localises to the cytosol. The protein localises to the golgi apparatus. The protein resides in the endomembrane system. Its subcellular location is the mitochondrion outer membrane. It is found in the peroxisome. It localises to the membrane. The protein localises to the clathrin-coated pit. The protein resides in the cytoplasmic vesicle. Its subcellular location is the secretory vesicle. It is found in the synaptic vesicle membrane. The enzyme catalyses GTP + H2O = GDP + phosphate + H(+). In terms of biological role, functions in mitochondrial and peroxisomal division. Mediates membrane fission through oligomerization into membrane-associated tubular structures that wrap around the scission site to constrict and sever the mitochondrial membrane through a GTP hydrolysis-dependent mechanism. The specific recruitment at scission sites is mediated by membrane receptors like MFF, MIEF1 and MIEF2 for mitochondrial membranes. While the recruitment by the membrane receptors is GTP-dependent, the following hydrolysis of GTP induces the dissociation from the receptors and allows DNM1L filaments to curl into closed rings that are probably sufficient to sever a double membrane. May play a role in the circadian control of mitochondrial ATP production. The polypeptide is Dynamin-1-like protein (Danio rerio (Zebrafish)).